We begin with the raw amino-acid sequence, 370 residues long: NSFL1 cofactor p47 (370 aa).

Residues 54–73 form a disordered region; the sequence is SQATPSSVSRGTAPSDNRVT. Phosphoserine is present on residues Ser74, Ser102, and Ser114. 2 disordered regions span residues 80–116 and 137–157; these read HDQD…RSPN and VTKS…GYRL. The short motif at 109–115 is the Nuclear localization signal element; the sequence is PPRKRSP. Ser140 carries the post-translational modification Phosphoserine; by CDK1. Tyr167 carries the phosphotyrosine modification. A Nuclear localization signal motif is present at residues 172–175; the sequence is RRRH. Ser176, Ser192, and Ser272 each carry phosphoserine. The 66-residue stretch at 179–244 folds into the SEP domain; sequence DVHVVLKLWK…MEDHRDEDFV (66 aa). Residues 272-292 form a disordered region; it reads SPAQQAENEAKASSSISIDES. Residues 291–368 form the UBX domain; the sequence is ESQPTTNIQI…NLLNAVIVQR (78 aa).

As to quaternary structure, part of a ternary complex containing STX5A, NSFL1C and VCP. NSFL1C forms a homotrimer that binds to one end of a VCP homohexamer. The complex binds to membranes enriched in phosphatidylethanolamine-containing lipids and promotes Golgi membrane fusion. Interaction with VCIP135 leads to dissociation of the complex via ATP hydrolysis by VCP. Binds ubiquitin and mono-ubiquitinated proteins via its N-terminal UBA-like domain when bound to VCP. Phosphorylated during mitosis. Phosphorylation inhibits interaction with Golgi membranes and is required for the fragmentation of the Golgi stacks during mitosis.

The protein resides in the nucleus. Its subcellular location is the golgi apparatus. The protein localises to the golgi stack. It localises to the chromosome. It is found in the cytoplasm. The protein resides in the cytoskeleton. Its subcellular location is the microtubule organizing center. The protein localises to the centrosome. Functionally, reduces the ATPase activity of VCP. Necessary for the fragmentation of Golgi stacks during mitosis and for VCP-mediated reassembly of Golgi stacks after mitosis. May play a role in VCP-mediated formation of transitional endoplasmic reticulum (tER). Inhibits the activity of CTSL (in vitro). Together with UBXN2B/p37, regulates the centrosomal levels of kinase AURKA/Aurora A during mitotic progression by promoting AURKA removal from centrosomes in prophase. Also, regulates spindle orientation during mitosis. This is NSFL1 cofactor p47 (NSFL1C) from Bos taurus (Bovine).